A 244-amino-acid polypeptide reads, in one-letter code: NAD-dependent protein deacetylase (244 aa).

A Deacetylase sirtuin-type domain is found at 1–244 (MSATERQLQY…IGDTCRQLRA (244 aa)). Ala-27, Thr-31, Phe-38, Arg-39, Gln-107, Ile-109, Asp-110, and His-125 together coordinate NAD(+). Residue Phe-38 participates in nicotinamide binding. Nicotinamide contacts are provided by Ile-109 and Asp-110. The active-site Proton acceptor is His-125. The Zn(2+) site is built by Cys-133, Cys-136, Cys-153, and Cys-156. 4 residues coordinate NAD(+): Ser-192, Ser-193, Asn-217, and Ile-235.

The protein belongs to the sirtuin family. Class U subfamily. Zn(2+) serves as cofactor.

Its subcellular location is the cytoplasm. It carries out the reaction N(6)-acetyl-L-lysyl-[protein] + NAD(+) + H2O = 2''-O-acetyl-ADP-D-ribose + nicotinamide + L-lysyl-[protein]. Its function is as follows. NAD-dependent protein deacetylase which modulates the activities of several enzymes which are inactive in their acetylated form. The protein is NAD-dependent protein deacetylase of Chromobacterium violaceum (strain ATCC 12472 / DSM 30191 / JCM 1249 / CCUG 213 / NBRC 12614 / NCIMB 9131 / NCTC 9757 / MK).